The primary structure comprises 313 residues: Solute carrier family 35 member E3 (313 aa).

9 helical membrane-spanning segments follow: residues 17–37, 40–60, 71–91, 126–146, 154–174, 187–206, 225–245, 252–272, and 275–295; these read GLLF…WIYV, GFPN…GLYI, SLPL…VVFT, FSVR…LNSY, LGMV…VWVG, LLYY…VPFF, LMVL…YWII, TYNM…YILF, and PLSV…LTYT.

It belongs to the TPT transporter family. SLC35E subfamily.

It is found in the membrane. Its function is as follows. Putative transporter. This is Solute carrier family 35 member E3 (Slc35e3) from Mus musculus (Mouse).